We begin with the raw amino-acid sequence, 705 residues long: GATOR2 complex protein WDR24 (705 aa).

WD repeat units lie at residues 1-28, 34-74, 77-117, 121-161, 165-207, and 211-254; these read MDENLLATAATNGVVVTWNLGKPSRNKQ, EHKR…SVST, GQSE…RYER, AHNG…AKEI, QTIA…IPSA, and EHKD…IDRA. The C4-type zinc-finger motif lies at 633–655; that stretch reads NCSNCKRPMSNRGWICDRCRQCA. Zn(2+) contacts are provided by Cys-634, Cys-637, Cys-648, Cys-651, Cys-658, Cys-661, Cys-672, Cys-675, His-677, His-680, His-683, Cys-694, Cys-698, His-700, and Cys-702. The RING-type; atypical zinc finger occupies 656-705; that stretch reads SMCAVCHHVVKGLFVWCQGCSHGGHLQHIMKWLETSSHCPAGCGHLCEYT.

The protein belongs to the WD repeat WDR24 family. As to quaternary structure, component of the GATOR2 subcomplex, composed of MIOS, SEC13, SEH1L, WDR24 and WDR59. The GATOR2 complex interacts with CASTOR1 and CASTOR2; the interaction is negatively regulated by arginine. The GATOR2 complex interacts with SESN1, SESN2 and SESN3; the interaction is negatively regulated by amino acids.

The protein resides in the lysosome membrane. The enzyme catalyses S-ubiquitinyl-[E2 ubiquitin-conjugating enzyme]-L-cysteine + [acceptor protein]-L-lysine = [E2 ubiquitin-conjugating enzyme]-L-cysteine + N(6)-ubiquitinyl-[acceptor protein]-L-lysine.. It functions in the pathway protein modification; protein ubiquitination. Its activity is regulated as follows. The GATOR2 complex is negatively regulated by the upstream amino acid sensors CASTOR1 and SESN2, which sequester the GATOR2 complex in absence of amino acids. In the presence of abundant amino acids, GATOR2 is released from CASTOR1 and SESN2 and activated. In terms of biological role, catalytic component of the GATOR2 complex, a multiprotein complex that acts as an activator of the amino acid-sensing branch of the mTORC1 signaling pathway. The GATOR2 complex indirectly activates mTORC1 through the inhibition of the GATOR1 subcomplex. GATOR2 probably acts as an E3 ubiquitin-protein ligase toward GATOR1. In the presence of abundant amino acids, the GATOR2 complex mediates ubiquitination of the NPRL2 core component of the GATOR1 complex, leading to GATOR1 inactivation. In the absence of amino acids, GATOR2 is inhibited, activating the GATOR1 complex. In addition to its role in regulation of the mTORC1 complex, promotes the acidification of lysosomes and facilitates autophagic flux. Within the GATOR2 complex, WDR24 constitutes the catalytic subunit that mediates 'Lys-6'-linked ubiquitination of NPRL2. The chain is GATOR2 complex protein WDR24 from Gallus gallus (Chicken).